The primary structure comprises 30 residues: Serum amyloid P-component (30 aa).

A Pentraxin (PTX) domain is found at A1–F30.

The protein belongs to the pentraxin family. As to quaternary structure, homopentamer. Discoid arrangement of 5 covalently bound subunits. It depends on Ca(2+) as a cofactor.

Its subcellular location is the secreted. This Anarhichas lupus (Atlantic wolffish) protein is Serum amyloid P-component.